The chain runs to 325 residues: GTP 3',8-cyclase (325 aa).

Residues Thr4–Leu219 form the Radical SAM core domain. Arg13 is a GTP binding site. [4Fe-4S] cluster is bound by residues Cys20 and Cys24. S-adenosyl-L-methionine is bound at residue Tyr26. Cys27 is a [4Fe-4S] cluster binding site. Arg63 contributes to the GTP binding site. Gly67 contacts S-adenosyl-L-methionine. GTP is bound at residue Thr94. Residue Ser118 coordinates S-adenosyl-L-methionine. Lys155 serves as a coordination point for GTP. S-adenosyl-L-methionine is bound at residue Met189. Residues Cys254 and Cys257 each contribute to the [4Fe-4S] cluster site. A GTP-binding site is contributed by Arg259 to Arg261. Cys271 contributes to the [4Fe-4S] cluster binding site.

The protein belongs to the radical SAM superfamily. MoaA family. In terms of assembly, monomer and homodimer. [4Fe-4S] cluster serves as cofactor.

The enzyme catalyses GTP + AH2 + S-adenosyl-L-methionine = (8S)-3',8-cyclo-7,8-dihydroguanosine 5'-triphosphate + 5'-deoxyadenosine + L-methionine + A + H(+). It functions in the pathway cofactor biosynthesis; molybdopterin biosynthesis. Catalyzes the cyclization of GTP to (8S)-3',8-cyclo-7,8-dihydroguanosine 5'-triphosphate. The sequence is that of GTP 3',8-cyclase from Pelotomaculum thermopropionicum (strain DSM 13744 / JCM 10971 / SI).